Here is a 511-residue protein sequence, read N- to C-terminus: Histidine ammonia-lyase (511 aa).

The 5-imidazolinone (Ala-Gly) cross-link spans 144–146; it reads ASG. Residue S145 is modified to 2,3-didehydroalanine (Ser).

It belongs to the PAL/histidase family. In terms of processing, contains an active site 4-methylidene-imidazol-5-one (MIO), which is formed autocatalytically by cyclization and dehydration of residues Ala-Ser-Gly.

It localises to the cytoplasm. The enzyme catalyses L-histidine = trans-urocanate + NH4(+). It participates in amino-acid degradation; L-histidine degradation into L-glutamate; N-formimidoyl-L-glutamate from L-histidine: step 1/3. This chain is Histidine ammonia-lyase, found in Halalkalibacterium halodurans (strain ATCC BAA-125 / DSM 18197 / FERM 7344 / JCM 9153 / C-125) (Bacillus halodurans).